We begin with the raw amino-acid sequence, 103 residues long: Co-chaperonin GroES (103 aa).

The protein belongs to the GroES chaperonin family. Heptamer of 7 subunits arranged in a ring. Interacts with the chaperonin GroEL.

It is found in the cytoplasm. Its function is as follows. Together with the chaperonin GroEL, plays an essential role in assisting protein folding. The GroEL-GroES system forms a nano-cage that allows encapsulation of the non-native substrate proteins and provides a physical environment optimized to promote and accelerate protein folding. GroES binds to the apical surface of the GroEL ring, thereby capping the opening of the GroEL channel. The polypeptide is Co-chaperonin GroES (Prochlorococcus marinus (strain MIT 9312)).